The chain runs to 444 residues: Phosphoribosylamine--glycine ligase (444 aa).

The ATP-grasp domain maps to 109–324; the sequence is RNLFKKYEID…FLDVCFAIAE (216 aa). 140–202 provides a ligand contact to ATP; the sequence is MTSLGKDVVV…EEKLVGVEFT (63 aa). Mg(2+)-binding residues include glutamine 282, glutamate 294, and asparagine 296. The Mn(2+) site is built by glutamine 282, glutamate 294, and asparagine 296.

The protein belongs to the GARS family. The cofactor is Mg(2+). It depends on Mn(2+) as a cofactor.

It catalyses the reaction 5-phospho-beta-D-ribosylamine + glycine + ATP = N(1)-(5-phospho-beta-D-ribosyl)glycinamide + ADP + phosphate + H(+). The protein operates within purine metabolism; IMP biosynthesis via de novo pathway; N(1)-(5-phospho-D-ribosyl)glycinamide from 5-phospho-alpha-D-ribose 1-diphosphate: step 2/2. This is Phosphoribosylamine--glycine ligase from Methanococcus maripaludis (strain C5 / ATCC BAA-1333).